The primary structure comprises 237 residues: Phosphoribosylaminoimidazole-succinocarboxamide synthase (237 aa).

It belongs to the SAICAR synthetase family.

The catalysed reaction is 5-amino-1-(5-phospho-D-ribosyl)imidazole-4-carboxylate + L-aspartate + ATP = (2S)-2-[5-amino-1-(5-phospho-beta-D-ribosyl)imidazole-4-carboxamido]succinate + ADP + phosphate + 2 H(+). It functions in the pathway purine metabolism; IMP biosynthesis via de novo pathway; 5-amino-1-(5-phospho-D-ribosyl)imidazole-4-carboxamide from 5-amino-1-(5-phospho-D-ribosyl)imidazole-4-carboxylate: step 1/2. This chain is Phosphoribosylaminoimidazole-succinocarboxamide synthase, found in Fusobacterium nucleatum subsp. nucleatum (strain ATCC 25586 / DSM 15643 / BCRC 10681 / CIP 101130 / JCM 8532 / KCTC 2640 / LMG 13131 / VPI 4355).